The chain runs to 186 residues: NADH-dependent FMN reductase SfnF (186 aa).

It belongs to the SsuE family.

It catalyses the reaction FMNH2 + NAD(+) = FMN + NADH + 2 H(+). In terms of biological role, involved in the dimethyl sulfide degradation pathway. Catalyzes the NADH-dependent reduction of FMN. This is NADH-dependent FMN reductase SfnF from Pseudomonas putida (Arthrobacter siderocapsulatus).